Here is a 356-residue protein sequence, read N- to C-terminus: MSWQNNLRSVSPYIAGEQAELTDMIKLNTNENPYPPSLQVQKVIEDFKSDNLRLYPSTDAKVLRKALATYHHLNTDQVFIGNGSDEVLSLSFLTFFNSEKPLLMPDISYSFYPIYCGLYHIPYQKIPLADDFSLSVNSYFQENGGIVIANPNAPTGMAISLQEIEEILQNNQDSIVLIDEAYIDFGGESCLPLLEKFDNLVVVQTFFKSRSLAGIRLGVAFGSAEAIAHLYDMKNSFNSYPIDSLAQKIGEASLNDETYFQKSVSKIITTRENFKKELIKLGFQVTDSKTNFVFVHHPKVDATTLFKALYEAKIIVRHWNQARISDWLRITIGTDREMNTVIQFLKEYLKNKEKSY.

Lys208 is modified (N6-(pyridoxal phosphate)lysine).

It belongs to the class-II pyridoxal-phosphate-dependent aminotransferase family. Histidinol-phosphate aminotransferase subfamily. Homodimer. Pyridoxal 5'-phosphate is required as a cofactor.

It catalyses the reaction L-histidinol phosphate + 2-oxoglutarate = 3-(imidazol-4-yl)-2-oxopropyl phosphate + L-glutamate. Its pathway is amino-acid biosynthesis; L-histidine biosynthesis; L-histidine from 5-phospho-alpha-D-ribose 1-diphosphate: step 7/9. The sequence is that of Histidinol-phosphate aminotransferase from Lactococcus lactis subsp. cremoris (strain MG1363).